The chain runs to 145 residues: Nickel-responsive regulator (145 aa).

Ni(2+)-binding residues include His77, His88, His90, and Cys96.

This sequence belongs to the transcriptional regulatory CopG/NikR family. As to quaternary structure, homotetramer. Ni(2+) serves as cofactor.

Functionally, transcriptional repressor of the nikABCDE operon. Is active in the presence of excessive concentrations of intracellular nickel. This chain is Nickel-responsive regulator, found in Edwardsiella ictaluri (strain 93-146).